The sequence spans 485 residues: Aldehyde dehydrogenase family 3 member A2 (485 aa).

Topologically, residues methionine 1 to lysine 463 are cytoplasmic. Glycine 185 to glycine 190 contributes to the NAD(+) binding site. Catalysis depends on residues glutamate 207 and cysteine 241. A Phosphoserine modification is found at serine 293. The helical transmembrane segment at leucine 464–tyrosine 484 threads the bilayer. The Prevents secretion from ER motif lies at asparagine 481 to tyrosine 484.

The protein belongs to the aldehyde dehydrogenase family. In terms of assembly, homodimer.

It localises to the microsome membrane. Its subcellular location is the endoplasmic reticulum membrane. It carries out the reaction an aldehyde + NAD(+) + H2O = a carboxylate + NADH + 2 H(+). It catalyses the reaction a fatty aldehyde + NAD(+) + H2O = a fatty acid + NADH + 2 H(+). The enzyme catalyses (2E)-hexadecenal + NAD(+) + H2O = (E)-hexadec-2-enoate + NADH + 2 H(+). The catalysed reaction is hexadecanoate + NADH + 2 H(+) = hexadecanal + NAD(+) + H2O. It carries out the reaction 22-oxodocosanoate + NAD(+) + H2O = docosanedioate + NADH + 2 H(+). It catalyses the reaction 2,6,10,14-tetramethylpentadecanal + NAD(+) + H2O = 2,6,10,14-tetramethylpentadecanoate + NADH + 2 H(+). The enzyme catalyses octadecanal + NAD(+) + H2O = octadecanoate + NADH + 2 H(+). The catalysed reaction is dodecanoate + NADH + 2 H(+) = dodecanal + NAD(+) + H2O. It carries out the reaction decanal + NAD(+) + H2O = decanoate + NADH + 2 H(+). It catalyses the reaction tetradecanal + NAD(+) + H2O = tetradecanoate + NADH + 2 H(+). The enzyme catalyses octanal + NAD(+) + H2O = octanoate + NADH + 2 H(+). The catalysed reaction is heptanal + NAD(+) + H2O = heptanoate + NADH + 2 H(+). It carries out the reaction (2E,6E)-farnesal + NAD(+) + H2O = (2E,6E)-farnesoate + NADH + 2 H(+). Functionally, catalyzes the oxidation of medium and long-chain aliphatic aldehydes to fatty acids. Active on a variety of saturated and unsaturated aliphatic aldehydes between 6 and 24 carbons in length. Responsible for conversion of the sphingosine 1-phosphate (S1P) degradation product hexadecenal to hexadecenoic acid. This chain is Aldehyde dehydrogenase family 3 member A2 (ALDH3A2), found in Macaca fascicularis (Crab-eating macaque).